A 129-amino-acid chain; its full sequence is Large ribosomal subunit protein bL19 (129 aa).

The protein belongs to the bacterial ribosomal protein bL19 family.

This protein is located at the 30S-50S ribosomal subunit interface and may play a role in the structure and function of the aminoacyl-tRNA binding site. The sequence is that of Large ribosomal subunit protein bL19 from Burkholderia mallei (strain NCTC 10247).